Consider the following 32-residue polypeptide: EACYNAGTFCGIKPGLCCSAICLSFVCISFDF.

3 disulfide bridges follow: Cys3–Cys18, Cys10–Cys22, and Cys17–Cys27. Pro14 carries the post-translational modification 4-hydroxyproline.

It belongs to the conotoxin O1 superfamily. In terms of tissue distribution, expressed by the venom duct.

It localises to the secreted. Its function is as follows. Delta-conotoxins bind to site 6 of voltage-gated sodium channels (Nav) and inhibit the inactivation process. The sequence is that of Delta-conotoxin-like MVID from Conus magus (Magical cone).